The following is an 830-amino-acid chain: WD repeat-containing protein 75 (830 aa).

9 WD repeats span residues 4-43 (EENIRVVRCGGSELNFRRAVFSADSKYIFCVSGDFVKVYS), 47-86 (EECVHILHGHRNLVTGIQLNPNNHLQLYSCSLDGTIKLWD), 90-131 (GILI…QLVS), 145-184 (KELSFVLDYINQSPKCIAFGNEGVYVAAVREFYLSVYFFK), 193-231 (LSSSRNKKHAKNNFTCVACHPTEDCIASGHMDGKIRLWR), 237-276 (KKYTYTCLHWHHDMVMDLAFSVTGTSLLSGGRESVLVEWR), 279-318 (TEKNKEFLPRLGATIEHISVSPAGDLFCTSHSDNKIIIIH), 324-362 (SAVIQGLVKDRSIFTGLMIDPRTKALVLNGKPGHLQFYS), and 376-423 (QQEY…KLWM). A Glycyl lysine isopeptide (Lys-Gly) (interchain with G-Cter in SUMO2) cross-link involves residue lysine 123. Lysine 427 participates in a covalent cross-link: Glycyl lysine isopeptide (Lys-Gly) (interchain with G-Cter in SUMO2). 4 WD repeats span residues 430 to 474 (GFIL…KVWI), 487 to 525 (GWTCDFVGSYHKYQATNCCFSEDGSLLAVSFEEIVTIWD), 529 to 569 (WELK…CCWN), and 574 to 611 (ALEWNAKLNVRVMEPDPNSENIAAISQSSVGSDLFVFK). Position 466 is an N6-acetyllysine (lysine 466). Serine 664 and serine 672 each carry phosphoserine. Lysine 676 is covalently cross-linked (Glycyl lysine isopeptide (Lys-Gly) (interchain with G-Cter in SUMO2)). Residues 763–806 (SAKEIPEDVDMEEEKESEDSDEENDFTEKVQDTSNTGLGEDIIH) are disordered. Residues 769 to 787 (EDVDMEEEKESEDSDEEND) show a composition bias toward acidic residues. Residues serine 779, serine 782, serine 796, and serine 811 each carry the phosphoserine modification.

As to quaternary structure, component of the proposed t-UTP subcomplex of the ribosomal small subunit (SSU) processome. SSU processome is composed of more than 70 proteins and the RNA chaperone small nucleolar RNA (snoRNA) U3.

Its subcellular location is the nucleus. It is found in the nucleolus. In terms of biological role, ribosome biogenesis factor. Part of the small subunit (SSU) processome, first precursor of the small eukaryotic ribosomal subunit. During the assembly of the SSU processome in the nucleolus, many ribosome biogenesis factors, an RNA chaperone and ribosomal proteins associate with the nascent pre-rRNA and work in concert to generate RNA folding, modifications, rearrangements and cleavage as well as targeted degradation of pre-ribosomal RNA by the RNA exosome. Involved in nucleolar processing of pre-18S ribosomal RNA. Required for optimal pre-ribosomal RNA transcription by RNA polymerase I. This is WD repeat-containing protein 75 from Homo sapiens (Human).